The following is a 465-amino-acid chain: Catalase cnsD (465 aa).

H39 is an active-site residue. Y331 provides a ligand contact to heme.

The protein belongs to the catalase family. Heme is required as a cofactor.

Its pathway is alkaloid biosynthesis. Its function is as follows. Catalase; part of the gene cluster that mediates the biosynthesis of communesins, a prominent class of indole alkaloids with great potential as pharmaceuticals. Communesins are biosynthesized by the coupling of tryptamine and aurantioclavine, two building blocks derived from L-tryptophan. The L-tryptophan decarboxylase cnsB converts L-tryptophan to tryptamine, whereas the tryptophan dimethylallyltransferase cnsF converts L-tryptophan to 4-dimethylallyl tryptophan which is further transformed to aurantioclavine by the aurantioclavine synthase cnsA, probably aided by the catalase cnsD. The cytochrome P450 monooxygenase cnsC catalyzes the heterodimeric coupling between the two different indole moieties, tryptamine and aurantioclavine, to construct vicinal quaternary stereocenters and yield the heptacyclic communesin scaffold. The O-methyltransferase cnsE then methylates the communesin scaffold to produce communesin K, the simplest characterized communesin that contains the heptacyclic core. The dioxygenase cnsJ converts communesin K into communesin I. Acylation to introduce the hexadienyl group at position N16 of communesin I by the acyltransferase cnsK leads to the production of communesin B. The hexadienyl group is produced by the highly reducing polyketide synthase cnsI, before being hydrolytically removed from cnsI by the serine hydrolase cnsH, converted into hexadienyl-CoA by the CoA ligase cnsG, and then transferred to communesin I by cnsK. Surprisingly, cnsK may also be a promiscuous acyltransferase that can tolerate a range of acyl groups, including acetyl-, propionyl-, and butyryl-CoA, which lead to communesins A, G and H respectively. The roles of the alpha-ketoglutarate-dependent dioxygenases cnsM and cnsP have still to be determined. This Penicillium expansum (Blue mold rot fungus) protein is Catalase cnsD.